We begin with the raw amino-acid sequence, 485 residues long: Noelin (485 aa).

Positions 1–24 (MSVPLLKIGVVLSTMAMITNWMSQ) are cleaved as a signal peptide. N33, N103, N187, N288, N307, N394, N431, and N473 each carry an N-linked (GlcNAc...) asparagine glycan. Residues 87–225 (RDARTKQLRQ…ERLRACMQKL (139 aa)) adopt a coiled-coil conformation. Residues 226 to 478 (ACGKLTGISD…QTLYNVTLFH (253 aa)) form the Olfactomedin-like domain. C227 and C409 form a disulfide bridge.

Homotetramer; disulfide-linked. Dimer of dimers, giving rise to a V-shaped homotretramer. Isoform 1 and isoform 3 interact with RTN4R. Identified in a complex with RTN4R and LINGO1. Peripherally associated with AMPAR complex. AMPAR complex consists of an inner core made of 4 pore-forming GluA/GRIA proteins (GRIA1, GRIA2, GRIA3 and GRIA4) and 4 major auxiliary subunits arranged in a twofold symmetry. One of the two pairs of distinct binding sites is occupied either by CNIH2, CNIH3 or CACNG2, CACNG3. The other harbors CACNG2, CACNG3, CACNG4, CACNG8 or GSG1L. This inner core of AMPAR complex is complemented by outer core constituents binding directly to the GluA/GRIA proteins at sites distinct from the interaction sites of the inner core constituents. Outer core constituents include at least PRRT1, PRRT2, CKAMP44/SHISA9, FRRS1L and NRN1. The proteins of the inner and outer core serve as a platform for other, more peripherally associated AMPAR constituents, including OLFM1. Alone or in combination, these auxiliary subunits control the gating and pharmacology of the AMPAR complex and profoundly impact their biogenesis and protein processing. Interacts with OLFM2. Post-translationally, in isoform 3 and isoform 4, the signal peptide is predicted to end in position 17. As to expression, expressed in the brain (at protein level). Expressed in the brain, predominantly in the cortex and hippocampus. In the pituitary only the two A-type and in the adrenal glands only the two B-type forms were detected.

Its subcellular location is the secreted. It localises to the synapse. The protein resides in the endoplasmic reticulum. It is found in the cell projection. The protein localises to the axon. Its subcellular location is the perikaryon. Functionally, contributes to the regulation of axonal growth in the embryonic and adult central nervous system by inhibiting interactions between RTN4R and LINGO1. Inhibits RTN4R-mediated axon growth cone collapse. May play an important role in regulating the production of neural crest cells by the neural tube. May be required for normal responses to olfactory stimuli. This Rattus norvegicus (Rat) protein is Noelin (Olfm1).